The following is a 40-amino-acid chain: Photosystem II reaction center protein J (40 aa).

A helical transmembrane segment spans residues 10–30 (LWLVGTVAGTLVIGLLGVFFY).

The protein belongs to the PsbJ family. PSII is composed of 1 copy each of membrane proteins PsbA, PsbB, PsbC, PsbD, PsbE, PsbF, PsbH, PsbI, PsbJ, PsbK, PsbL, PsbM, PsbT, PsbX, PsbY, PsbZ, Psb30/Ycf12, at least 3 peripheral proteins of the oxygen-evolving complex and a large number of cofactors. It forms dimeric complexes.

It is found in the plastid. The protein resides in the chloroplast thylakoid membrane. Functionally, one of the components of the core complex of photosystem II (PSII). PSII is a light-driven water:plastoquinone oxidoreductase that uses light energy to abstract electrons from H(2)O, generating O(2) and a proton gradient subsequently used for ATP formation. It consists of a core antenna complex that captures photons, and an electron transfer chain that converts photonic excitation into a charge separation. The chain is Photosystem II reaction center protein J from Adiantum capillus-veneris (Maidenhair fern).